A 73-amino-acid chain; its full sequence is RNA-binding protein Hfq (73 aa).

Residues 8 to 68 (DQFLNQIRKD…ISTFAPQKNV (61 aa)) enclose the Sm domain.

The protein belongs to the Hfq family. Homohexamer.

Functionally, RNA chaperone that binds small regulatory RNA (sRNAs) and mRNAs to facilitate mRNA translational regulation in response to envelope stress, environmental stress and changes in metabolite concentrations. Also binds with high specificity to tRNAs. This is RNA-binding protein Hfq from Bacillus pumilus (strain SAFR-032).